We begin with the raw amino-acid sequence, 114 residues long: Cytochrome c2 (114 aa).

Glutamine 1 carries the post-translational modification Pyrrolidone carboxylic acid. Residues cysteine 13, cysteine 16, histidine 17, and methionine 93 each contribute to the heme c site.

It belongs to the cytochrome c family. Post-translationally, binds 1 heme c group covalently per subunit.

The protein resides in the periplasm. Its function is as follows. Cytochrome c2 is found mainly in purple, non-sulfur, photosynthetic bacteria where it functions as the electron donor to the oxidized bacteriochlorophyll in the photophosphorylation pathway. However, it may also have a role in the respiratory chain and is found in some non-photosynthetic bacteria. The protein is Cytochrome c2 of Rhodopseudomonas palustris.